A 207-amino-acid chain; its full sequence is Transcription factor bHLH149 (207 aa).

The segment at 1 to 25 (MVESLFPSIENTGESSRRKKPRISE) is disordered. The bHLH domain occupies 132 to 181 (KSRKGLTETNRIKLPAVERKLKILGRLVPGCRKVSVPNLLDEATDYIAAL).

In terms of assembly, homodimer. Interacts with PRE3.

The protein resides in the nucleus. Functionally, atypical bHLH transcription factor probably unable to bind DNA. Negatively regulates brassinosteroid signaling. The sequence is that of Transcription factor bHLH149 (BHLH149) from Arabidopsis thaliana (Mouse-ear cress).